The primary structure comprises 323 residues: Beta-ketoacyl-[acyl-carrier-protein] synthase III (323 aa).

Active-site residues include Cys114 and His250. The ACP-binding stretch occupies residues 251 to 255 (QANLR). Asn280 is an active-site residue.

The protein belongs to the thiolase-like superfamily. FabH family. Homodimer.

It is found in the cytoplasm. The catalysed reaction is malonyl-[ACP] + acetyl-CoA + H(+) = 3-oxobutanoyl-[ACP] + CO2 + CoA. Its pathway is lipid metabolism; fatty acid biosynthesis. Functionally, catalyzes the condensation reaction of fatty acid synthesis by the addition to an acyl acceptor of two carbons from malonyl-ACP. Catalyzes the first condensation reaction which initiates fatty acid synthesis and may therefore play a role in governing the total rate of fatty acid production. Possesses both acetoacetyl-ACP synthase and acetyl transacylase activities. Its substrate specificity determines the biosynthesis of branched-chain and/or straight-chain of fatty acids. The sequence is that of Beta-ketoacyl-[acyl-carrier-protein] synthase III from Cereibacter sphaeroides (strain ATCC 17029 / ATH 2.4.9) (Rhodobacter sphaeroides).